Consider the following 146-residue polypeptide: uncharacterized protein (146 aa).

A helical membrane pass occupies residues 7 to 27 (FVLSITIVLVILIIIAFIWYN).

The protein belongs to the asfivirus E146L family.

Its subcellular location is the host membrane. It localises to the virion. This is an uncharacterized protein from Ornithodoros (relapsing fever ticks).